The following is a 75-amino-acid chain: UPF0270 protein PSPTO_1630 (75 aa).

This sequence belongs to the UPF0270 family.

In Pseudomonas syringae pv. tomato (strain ATCC BAA-871 / DC3000), this protein is UPF0270 protein PSPTO_1630.